Here is a 425-residue protein sequence, read N- to C-terminus: Histidine--tRNA ligase (425 aa).

It belongs to the class-II aminoacyl-tRNA synthetase family. As to quaternary structure, homodimer.

It is found in the cytoplasm. It catalyses the reaction tRNA(His) + L-histidine + ATP = L-histidyl-tRNA(His) + AMP + diphosphate + H(+). In Tolumonas auensis (strain DSM 9187 / NBRC 110442 / TA 4), this protein is Histidine--tRNA ligase.